Here is a 214-residue protein sequence, read N- to C-terminus: Large ribosomal subunit protein bL25 (214 aa).

Residues 187-214 (AEVAPSIEETVEPEVIKKGKKAEEEEEK) are disordered. Over residues 200–214 (EVIKKGKKAEEEEEK) the composition is skewed to basic and acidic residues.

This sequence belongs to the bacterial ribosomal protein bL25 family. CTC subfamily. In terms of assembly, part of the 50S ribosomal subunit; part of the 5S rRNA/L5/L18/L25 subcomplex. Contacts the 5S rRNA. Binds to the 5S rRNA independently of L5 and L18.

This is one of the proteins that binds to the 5S RNA in the ribosome where it forms part of the central protuberance. The sequence is that of Large ribosomal subunit protein bL25 from Thermodesulfovibrio yellowstonii (strain ATCC 51303 / DSM 11347 / YP87).